The chain runs to 456 residues: Mitochondrial import inner membrane translocase subunit TIM50 (456 aa).

Residues 1–22 constitute a mitochondrion transit peptide; that stretch reads MSLSKLSQKCFSRHHARTFIRF. Over 23 to 171 the chain is Mitochondrial matrix; the sequence is SSSDFQSLLG…RRKRMERNTR (149 aa). Disordered regions lie at residues 101-120 and 132-165; these read ETEK…AIDE and EEAA…RRKR. A compositionally biased stretch (polar residues) spans 137–153; it reads SKTSAPSGSSGDNNDQP. Residues 172–192 form a helical membrane-spanning segment; that stretch reads IGGYVLLGGSVIGFISFCFYY. The Mitochondrial intermembrane segment spans residues 193–456; it reads GRAQRDEAGN…LFGFRRHASA (264 aa). Residues 247-391 form the FCP1 homology domain; that stretch reads YLQPKYTIVI…VDLAELLKTI (145 aa).

It belongs to the TIM50 family. Component of the TIM23 complex at least composed of tim-23, tim-17 and tim-50.

It is found in the mitochondrion inner membrane. Functionally, essential component of the TIM23 complex, a complex that mediates the translocation of transit peptide-containing proteins across the mitochondrial inner membrane. The chain is Mitochondrial import inner membrane translocase subunit TIM50 (scpl-4) from Caenorhabditis briggsae.